The primary structure comprises 72 residues: Heat shock factor-binding protein 1-like protein 1 (72 aa).

A coiled-coil region spans residues 12-62 (DLLQNAAENLLLEVEEHFQALTTTLNLRMEEMGSRIEDLQRNVDDLMTQAG).

The protein belongs to the HSBP1 family.

The protein is Heat shock factor-binding protein 1-like protein 1 (Hsbp1l1) of Mus musculus (Mouse).